Reading from the N-terminus, the 94-residue chain is MRRSTIVPTSRTSSSSPSPSQMKSFQMNRLVDQLSKLQSNMSHLENHLHVTAIQAEAIRRLGALQASLLMASGRVMSEARIQKSSDAVEEDVPM.

Positions 1 to 20 (MRRSTIVPTSRTSSSSPSPS) are enriched in low complexity. The segment at 1-25 (MRRSTIVPTSRTSSSSPSPSQMKSF) is disordered.

The protein belongs to the DASH complex HSK3 family. Component of the DASH complex consisting of ask1, dad1, dad2, dad3, dad4, dam1, duo1, dad5, spc19 and spc34, with a stoichiometry of one copy of each subunit per complex. Multiple DASH complexes oligomerize to form a ring that encircles spindle microtubules and organizes the rod-like NDC80 complexes of the outer kinetochore. DASH complex oligomerization strengthens microtubule attachments. On cytoplasmic microtubules, DASH complexes appear to form patches instead of rings.

It is found in the nucleus. The protein localises to the cytoplasm. Its subcellular location is the cytoskeleton. The protein resides in the spindle. It localises to the chromosome. It is found in the centromere. The protein localises to the kinetochore. Its function is as follows. Component of the DASH complex that connects microtubules with kinetochores and couples microtubule depolymerisation to chromosome movement; it is involved in retrieving kinetochores to the spindle poles before their re-orientation on the spindle in early mitosis and allows microtubule depolymerization to pull chromosomes apart and resist detachment during anaphase. Kinetochores, consisting of a centromere-associated inner segment and a microtubule-contacting outer segment, play a crucial role in chromosome segregation by mediating the physical connection between centromeric DNA and microtubules. Kinetochores also serve as an input point for the spindle assembly checkpoint, which delays anaphase until all chromosomes have bioriented on the mitotic spindle. The DASH complex mediates bipolar kinetochore-microtubule attachments and facilitates the formation of additional interactions between outer kinetochore components and spindle microtubules. During chromosome movement along the microtubule, it is required both for the sliding of kinetochores along the lateral side of the microtubule and also for microtubule end-on pulling on the kinetochore. Modulates cytoplasmic microtubule dynamics by tracking the plus-end of shortening microtubules and slowing their depolymerization. This is DASH complex subunit DAD5 from Schizosaccharomyces pombe (strain 972 / ATCC 24843) (Fission yeast).